The chain runs to 1429 residues: MASIPEERSAEHRARSYQLEMFEASLKGNIIVVMGTGSGKTQIALLRIIHELENSDGKLIWFLAPTVPLCLQQHRVISQHIPAVKSRTLLGSDKVELWTEQAVWDAVLEGLQVIVSTPAVLHDAMTHGFVRISRLGLLIFDEAHHCIRKHPTNMIMRNFYHPALQEYGPGAVPRILGLTASAGSSREGLQTIEMNLNSVCTTPQAHRQELLEYTHMPELRRVLYTPLMKENASLWEGSTLQKLLERDNTYCSGQMKTFVCKAVHIFQELGIWAAEYFIRASVEELLSHAYVHSKIDLDYDEREYLVNILSKSPVPDIDVHSTDPKDFPVSPKFEALISFLMSTEDINFSGLIFVEQRAAVTVMSYLLSTHPSTRDRFRTGSFIGMSNSTNRKTMLGDLLSAKMQPDTLDDFRYGRKNLIVATDVLKEGIDVSACSVVICYNIPKGFESFIQRRGRARRQNSTYSMMLSTEDDGSTLDKWQKFEKIMEEACLEDRRRTEELRALGSLDEDVCTRFCVRSTGAILTAEYAMQHLVHFCDTLPRQNYVEDKPEFSFERNDGGLLRAKVILPSSVNPKVRRAEGKAWWKTERAAKKEAAFYAYKALYEHGLVNDNLLPLTKSREFTRKDISLLPAVQKVSEQYDPWVDWAHLWSSTNLYQNRILVRQNEEDTSMKFITPTATPPIAPMKLCWDSETTYTLEFEAAGAVSLTAENIERMRAATSLYLQATTSTPLAGNKDYIALFGPDLPWDELETWLKKNQGHEPAIQVFSSQRPLDRMGVVRDRSRYGELLIFKRWLNRSGDLELECDPYPSKRRNLLQRQTLAKKRPAEDEILGSPTKKRILSASHCTIDRLPASETVFGRFIPVILDRLEAALVATRLCETVLRDIQFQDLRHVITAITMPLAQAPTDYQRYEFFGDSVLKFTVAASLFYNNPNWHEGYLTETLHALVQNARLTRAALDQGLDAYIISNRFTPRKWSAPLISEKLYASASTRSMSAKVLADVVEALIGAAYIDGGLHKAQSCIVRFLPEIELPETKLPRPESMPMSKDHKKPHLIQQENLENHIGYTFKDKTLLMEALTHPSCPYDTSIQSYQRLEFLGDAVLDMLIVDLIRAHHVECQQGEMTKIKHAIVNGHLLAFLCMQFKWAMPSPLTPSIDTGTETETEIISPPPKTLSLYSYLRYSPSRPLPLHVEPESGSSNALTRHNLLCPSILHALNNTTAYPWSLFSAIHADKFFSDVVESIIGAIFVDSGGDLGACAGFIERLGLVRIAKRILDERVDVTHPTQRAQIELQKLAARLGCNDGFRFECRTVRDLSSGKRKTLEVDINDHYGDEDPAVLGAEGPELTYTCTISLATLRTNQDFGRDLDDIVVTGCLSKEDAEIQAANLVIELVGRLESGRLYKKNMDLDIDTGVQVDLDLDMNLDPGITTG.

Residues 21–200 form the Helicase ATP-binding domain; the sequence is MFEASLKGNI…TIEMNLNSVC (180 aa). Position 34–41 (34–41) interacts with ATP; sequence MGTGSGKT. A DEAH box motif is present at residues 141-144; sequence DEAH. The Helicase C-terminal domain occupies 335-501; the sequence is ALISFLMSTE…EDRRRTEELR (167 aa). The 95-residue stretch at 528–622 folds into the Dicer dsRNA-binding fold domain; sequence AMQHLVHFCD…LPLTKSREFT (95 aa). 2 consecutive RNase III domains span residues 874 to 1014 and 1056 to 1250; these read ATRL…IDGG and QENL…VDSG. Residues E1095, D1236, and E1239 each coordinate Mg(2+).

It belongs to the helicase family. Dicer subfamily. The cofactor is Mg(2+). Mn(2+) is required as a cofactor.

In terms of biological role, dicer-like endonuclease involved in cleaving double-stranded RNA in the RNA interference (RNAi) pathway. Produces 21 to 25 bp dsRNAs (siRNAs) which target the selective destruction of homologous RNAs leading to sequence-specific suppression of gene expression, called post-transcriptional gene silencing (PTGS). Part of a broad host defense response against viral infection and transposons. This Emericella nidulans (strain FGSC A4 / ATCC 38163 / CBS 112.46 / NRRL 194 / M139) (Aspergillus nidulans) protein is Dicer-like protein 2 (dcl2).